Here is a 329-residue protein sequence, read N- to C-terminus: Transmembrane protein I329L (329 aa).

Positions 1–31 (MLRVFIFFVFLGSGLAGKVKSPITCKYFISK) are cleaved as a signal peptide. Asn-32, Asn-39, Asn-44, Asn-58, Asn-76, Asn-82, Asn-101, Asn-185, and Asn-219 each carry an N-linked (GlcNAc...) asparagine; by host glycan. At 32-239 (NNTWYKYNVT…NTERYKNCYP (208 aa)) the chain is on the extracellular side. The chain crosses the membrane as a helical span at residues 240 to 260 (FVLVSIICSCISSLFLLICLL). Residues 261-329 (RTICKKYSCT…EKKVSCSRRK (69 aa)) are Cytoplasmic-facing.

This sequence belongs to the asfivirus I329L family. In terms of processing, highly glycosylated.

The protein localises to the host endoplasmic reticulum membrane. It is found in the host Golgi apparatus membrane. Functionally, viral TLR3 homolog that probably prevents TLR3 dimerization and subsequent induction of IFN. Inhibits dsRNA-stimulated activation of NF-kB and IRF3. This chain is Transmembrane protein I329L, found in Ornithodoros (relapsing fever ticks).